The primary structure comprises 230 residues: Large ribosomal subunit protein uL1c (230 aa).

This sequence belongs to the universal ribosomal protein uL1 family. As to quaternary structure, part of the 50S ribosomal subunit.

The protein resides in the plastid. Its subcellular location is the chloroplast. Binds directly to 23S rRNA. Might be involved in E site tRNA release (Potential). The chain is Large ribosomal subunit protein uL1c (rpl1) from Thalassiosira pseudonana (Marine diatom).